The sequence spans 616 residues: Protein phosphatase EYA4 (616 aa).

N-acetylmethionine is present on methionine 1. 3 disordered regions span residues 1–66 (MEDT…VTTN), 186–211 (SQTQSPLQSGCLSYSPGFSTPQPGQT), and 277–345 (ADGT…DSDL). Residues lysine 14 and lysine 52 each participate in a glycyl lysine isopeptide (Lys-Gly) (interchain with G-Cter in SUMO2) cross-link. The segment covering 56-66 (SGLSSTSVTTN) has biased composition (low complexity). Over residues 277 to 311 (ADGTSSSTSTYQLQESLQGLTSQPGEFDTVQSPST) the composition is skewed to polar residues. Residue serine 338 is modified to Phosphoserine. Aspartate 352 functions as the Nucleophile in the catalytic mechanism. Positions 352, 354, and 580 each coordinate Mg(2+). Aspartate 354 (proton donor) is an active-site residue.

The protein belongs to the HAD-like hydrolase superfamily. EYA family. In terms of assembly, interacts with SIX3; translocates EYA4 from the cytoplasm to the nucleus and promotes activation of their target genes. It depends on Mg(2+) as a cofactor. As to expression, in the embryo, expressed mainly in the craniofacial mesenchyme, dermamyotome and limb.

It is found in the cytoplasm. Its subcellular location is the nucleus. The catalysed reaction is O-phospho-L-tyrosyl-[protein] + H2O = L-tyrosyl-[protein] + phosphate. Tyrosine phosphatase that specifically dephosphorylates 'Tyr-142' of histone H2AX (H2AXY142ph). 'Tyr-142' phosphorylation of histone H2AX plays a central role in DNA repair and acts as a mark that distinguishes between apoptotic and repair responses to genotoxic stress. Promotes efficient DNA repair by dephosphorylating H2AX, promoting the recruitment of DNA repair complexes containing MDC1. Its function as histone phosphatase probably explains its role in transcription regulation during organogenesis. May be involved in development of the eye. This chain is Protein phosphatase EYA4 (Eya4), found in Mus musculus (Mouse).